We begin with the raw amino-acid sequence, 509 residues long: ATP synthase subunit alpha (509 aa).

169-176 (GDRQTGKT) contacts ATP.

Belongs to the ATPase alpha/beta chains family. In terms of assembly, F-type ATPases have 2 components, CF(1) - the catalytic core - and CF(0) - the membrane proton channel. CF(1) has five subunits: alpha(3), beta(3), gamma(1), delta(1), epsilon(1). CF(0) has three main subunits: a(1), b(2) and c(9-12). The alpha and beta chains form an alternating ring which encloses part of the gamma chain. CF(1) is attached to CF(0) by a central stalk formed by the gamma and epsilon chains, while a peripheral stalk is formed by the delta and b chains.

Its subcellular location is the cell inner membrane. The catalysed reaction is ATP + H2O + 4 H(+)(in) = ADP + phosphate + 5 H(+)(out). Functionally, produces ATP from ADP in the presence of a proton gradient across the membrane. The alpha chain is a regulatory subunit. The chain is ATP synthase subunit alpha from Sinorhizobium fredii (strain NBRC 101917 / NGR234).